Reading from the N-terminus, the 412-residue chain is Putative competence-damage inducible protein (412 aa).

This sequence belongs to the CinA family.

This chain is Putative competence-damage inducible protein, found in Clostridium perfringens (strain SM101 / Type A).